The primary structure comprises 392 residues: Phosphoglycerate kinase (392 aa).

Substrate is bound by residues 21-23, Arg-36, 59-62, Arg-113, and Arg-146; these read DFN and HLGR. ATP contacts are provided by residues Lys-197, Glu-319, and 345 to 348; that span reads GGDT.

Belongs to the phosphoglycerate kinase family. As to quaternary structure, monomer.

The protein resides in the cytoplasm. The catalysed reaction is (2R)-3-phosphoglycerate + ATP = (2R)-3-phospho-glyceroyl phosphate + ADP. It functions in the pathway carbohydrate degradation; glycolysis; pyruvate from D-glyceraldehyde 3-phosphate: step 2/5. The chain is Phosphoglycerate kinase from Francisella tularensis subsp. novicida (strain U112).